The chain runs to 604 residues: Uptake hydrogenase large subunit (604 aa).

Ni(2+)-binding residues include Cys-76, Cys-79, Cys-583, and Cys-586.

This sequence belongs to the [NiFe]/[NiFeSe] hydrogenase large subunit family. As to quaternary structure, heterodimer of a large and a small subunit. It depends on Ni(2+) as a cofactor.

Its subcellular location is the cell membrane. It catalyses the reaction H2 + A = AH2. In terms of biological role, this enzyme recycles the H(2) produced by nitrogenase to increase the production of ATP and to protect nitrogenase against inhibition or damage by O(2) under carbon- or phosphate-limited conditions. In Afipia carboxidovorans (strain ATCC 49405 / DSM 1227 / KCTC 32145 / OM5) (Oligotropha carboxidovorans), this protein is Uptake hydrogenase large subunit (hoxL).